Consider the following 178-residue polypeptide: Cytochrome b6-f complex iron-sulfur subunit 2 (178 aa).

A helical membrane pass occupies residues 17–36 (LLNFFTGAIVATTASAAIYP). The Rieske domain maps to 61 to 161 (GHPIPASQIL…VQVKDDYIWI (101 aa)). Residues cysteine 107, histidine 109, cysteine 125, and histidine 128 each contribute to the [2Fe-2S] cluster site. The cysteines at positions 112 and 127 are disulfide-linked.

It belongs to the Rieske iron-sulfur protein family. As to quaternary structure, the 4 large subunits of the cytochrome b6-f complex are cytochrome b6, subunit IV (17 kDa polypeptide, PetD), cytochrome f and the Rieske protein, while the 4 small subunits are PetG, PetL, PetM and PetN. The complex functions as a dimer. [2Fe-2S] cluster serves as cofactor.

The protein resides in the cellular thylakoid membrane. The catalysed reaction is 2 oxidized [plastocyanin] + a plastoquinol + 2 H(+)(in) = 2 reduced [plastocyanin] + a plastoquinone + 4 H(+)(out). Functionally, component of the cytochrome b6-f complex, which mediates electron transfer between photosystem II (PSII) and photosystem I (PSI), cyclic electron flow around PSI, and state transitions. The protein is Cytochrome b6-f complex iron-sulfur subunit 2 of Nostoc sp. (strain PCC 7120 / SAG 25.82 / UTEX 2576).